Consider the following 353-residue polypeptide: Photosystem II protein D1 (353 aa).

Threonine 2 is modified (N-acetylthreonine). Threonine 2 carries the phosphothreonine modification. 3 consecutive transmembrane segments (helical) span residues 29 to 46, 118 to 133, and 142 to 156; these read YIGW…TATS, HFLL…EWEL, and WIAV…AATA. Histidine 118 lines the chlorophyll a pocket. Residue tyrosine 126 coordinates pheophytin a. [CaMn4O5] cluster-binding residues include aspartate 170 and glutamate 189. A helical transmembrane segment spans residues 197 to 218; it reads FHMLGVAGVFGGSLFSAMHGSL. Histidine 198 contacts chlorophyll a. A quinone contacts are provided by residues histidine 215 and 264–265; that span reads SF. A Fe cation-binding site is contributed by histidine 215. Histidine 272 contributes to the Fe cation binding site. A helical transmembrane segment spans residues 274–288; it reads FLAAWPVAGIWFTAL. [CaMn4O5] cluster-binding residues include histidine 332, glutamate 333, aspartate 342, and alanine 344. Positions 345–353 are excised as a propeptide; sequence AVESISIGG.

Belongs to the reaction center PufL/M/PsbA/D family. As to quaternary structure, PSII is composed of 1 copy each of membrane proteins PsbA, PsbB, PsbC, PsbD, PsbE, PsbF, PsbH, PsbI, PsbJ, PsbK, PsbL, PsbM, PsbT, PsbX, PsbY, PsbZ, Psb30/Ycf12, at least 3 peripheral proteins of the oxygen-evolving complex and a large number of cofactors. It forms dimeric complexes. The D1/D2 heterodimer binds P680, chlorophylls that are the primary electron donor of PSII, and subsequent electron acceptors. It shares a non-heme iron and each subunit binds pheophytin, quinone, additional chlorophylls, carotenoids and lipids. D1 provides most of the ligands for the Mn4-Ca-O5 cluster of the oxygen-evolving complex (OEC). There is also a Cl(-1) ion associated with D1 and D2, which is required for oxygen evolution. The PSII complex binds additional chlorophylls, carotenoids and specific lipids. serves as cofactor. Post-translationally, tyr-161 forms a radical intermediate that is referred to as redox-active TyrZ, YZ or Y-Z. In terms of processing, C-terminally processed by CTPA; processing is essential to allow assembly of the oxygen-evolving complex and thus photosynthetic growth.

Its subcellular location is the plastid. The protein localises to the chloroplast thylakoid membrane. It catalyses the reaction 2 a plastoquinone + 4 hnu + 2 H2O = 2 a plastoquinol + O2. Its function is as follows. Photosystem II (PSII) is a light-driven water:plastoquinone oxidoreductase that uses light energy to abstract electrons from H(2)O, generating O(2) and a proton gradient subsequently used for ATP formation. It consists of a core antenna complex that captures photons, and an electron transfer chain that converts photonic excitation into a charge separation. The D1/D2 (PsbA/PsbD) reaction center heterodimer binds P680, the primary electron donor of PSII as well as several subsequent electron acceptors. The sequence is that of Photosystem II protein D1 from Pinus koraiensis (Korean pine).